A 72-amino-acid chain; its full sequence is Sperm protein associated with the nucleus on the X chromosome N1 (72 aa).

The tract at residues 1 to 40 is disordered; the sequence is MEKPTSSTNGEKRKSPCDSNSKNDEMQETPNRDLVLEPSL. Residues 10-35 are compositionally biased toward basic and acidic residues; that stretch reads GEKRKSPCDSNSKNDEMQETPNRDLV.

This sequence belongs to the SPAN-X family.

This Pan troglodytes (Chimpanzee) protein is Sperm protein associated with the nucleus on the X chromosome N1 (SPANXN1).